Reading from the N-terminus, the 390-residue chain is GTPase Obg (390 aa).

The Obg domain maps to 1 to 159 (MKFVDEAAIL…RDILLELLLL (159 aa)). Positions 160–333 (ADVGMLGLPN…LCWDVMKFIN (174 aa)) constitute an OBG-type G domain. GTP-binding positions include 166 to 173 (GLPNAGKS), 191 to 195 (FTTLV), 213 to 216 (DIPG), 283 to 286 (NKID), and 314 to 316 (SAV). Residues S173 and T193 each coordinate Mg(2+). Residues 366-384 (AEADDDWDDDWDEEDDEGV) show a composition bias toward acidic residues. A disordered region spans residues 366 to 390 (AEADDDWDDDWDEEDDEGVEIIYQK).

Belongs to the TRAFAC class OBG-HflX-like GTPase superfamily. OBG GTPase family. Monomer. Mg(2+) is required as a cofactor.

The protein localises to the cytoplasm. An essential GTPase which binds GTP, GDP and possibly (p)ppGpp with moderate affinity, with high nucleotide exchange rates and a fairly low GTP hydrolysis rate. Plays a role in control of the cell cycle, stress response, ribosome biogenesis and in those bacteria that undergo differentiation, in morphogenesis control. The chain is GTPase Obg from Serratia proteamaculans (strain 568).